The following is a 528-amino-acid chain: Transcription factor cghF (528 aa).

The segment at 232-283 (TPPNHATSSTPTSTRTPPTYHPHGPRPKSPLSSTPSPRTESTKSAAPSRDLA) is disordered. Positions 238–249 (TSSTPTSTRTPP) are enriched in low complexity. Polar residues predominate over residues 261 to 276 (PLSSTPSPRTESTKSA).

It localises to the nucleus. Its function is as follows. Transcription factor that regulates the expression of the gene cluster that mediates the biosynthesis of the tetramic acid Sch210972, a potential anti-HIV fungal natural product that contains a decalin core. This Chaetomium globosum (strain ATCC 6205 / CBS 148.51 / DSM 1962 / NBRC 6347 / NRRL 1970) (Soil fungus) protein is Transcription factor cghF.